Reading from the N-terminus, the 216-residue chain is Imidazole glycerol phosphate synthase subunit HisH 1 (216 aa).

One can recognise a Glutamine amidotransferase type-1 domain in the interval 4–216; it reads CVLIVDAGLG…LQNFIALNPC (213 aa). The active-site Nucleophile is cysteine 84. Catalysis depends on residues histidine 195 and glutamate 197.

As to quaternary structure, heterodimer of HisH and HisF.

It localises to the cytoplasm. It carries out the reaction 5-[(5-phospho-1-deoxy-D-ribulos-1-ylimino)methylamino]-1-(5-phospho-beta-D-ribosyl)imidazole-4-carboxamide + L-glutamine = D-erythro-1-(imidazol-4-yl)glycerol 3-phosphate + 5-amino-1-(5-phospho-beta-D-ribosyl)imidazole-4-carboxamide + L-glutamate + H(+). It catalyses the reaction L-glutamine + H2O = L-glutamate + NH4(+). Its pathway is amino-acid biosynthesis; L-histidine biosynthesis; L-histidine from 5-phospho-alpha-D-ribose 1-diphosphate: step 5/9. In terms of biological role, IGPS catalyzes the conversion of PRFAR and glutamine to IGP, AICAR and glutamate. The HisH subunit provides the glutamine amidotransferase activity that produces the ammonia necessary to HisF for the synthesis of IGP and AICAR. This chain is Imidazole glycerol phosphate synthase subunit HisH 1 (hisH1), found in Prochlorococcus marinus (strain MIT 9313).